Consider the following 245-residue polypeptide: tRNA (guanine-N(1)-)-methyltransferase (245 aa).

Residues G113 and 133-138 (IGDYVL) contribute to the S-adenosyl-L-methionine site.

This sequence belongs to the RNA methyltransferase TrmD family. Homodimer.

It is found in the cytoplasm. The catalysed reaction is guanosine(37) in tRNA + S-adenosyl-L-methionine = N(1)-methylguanosine(37) in tRNA + S-adenosyl-L-homocysteine + H(+). Specifically methylates guanosine-37 in various tRNAs. The sequence is that of tRNA (guanine-N(1)-)-methyltransferase from Anoxybacillus flavithermus (strain DSM 21510 / WK1).